A 453-amino-acid polypeptide reads, in one-letter code: Ribosomal protein uS12 methylthiotransferase RimO (453 aa).

The 111-residue stretch at 6–116 folds into the MTTase N-terminal domain; it reads PKVGFVSLGC…VMEAVHEALP (111 aa). Residues cysteine 15, cysteine 51, cysteine 80, cysteine 147, cysteine 151, and cysteine 154 each contribute to the [4Fe-4S] cluster site. Positions 133-370 constitute a Radical SAM core domain; the sequence is LTPRHYAYLK…MEKQAQISAA (238 aa). Positions 373–441 constitute a TRAM domain; the sequence is EAKIGTVQQC…EHDLYGDALP (69 aa).

Belongs to the methylthiotransferase family. RimO subfamily. The cofactor is [4Fe-4S] cluster.

It localises to the cytoplasm. The enzyme catalyses L-aspartate(89)-[ribosomal protein uS12]-hydrogen + (sulfur carrier)-SH + AH2 + 2 S-adenosyl-L-methionine = 3-methylsulfanyl-L-aspartate(89)-[ribosomal protein uS12]-hydrogen + (sulfur carrier)-H + 5'-deoxyadenosine + L-methionine + A + S-adenosyl-L-homocysteine + 2 H(+). In terms of biological role, catalyzes the methylthiolation of an aspartic acid residue of ribosomal protein uS12. This is Ribosomal protein uS12 methylthiotransferase RimO from Stenotrophomonas maltophilia (strain K279a).